A 65-amino-acid chain; its full sequence is Large ribosomal subunit protein bL31 (65 aa).

Positions 16, 18, 36, and 39 each coordinate Zn(2+).

This sequence belongs to the bacterial ribosomal protein bL31 family. Type A subfamily. In terms of assembly, part of the 50S ribosomal subunit. It depends on Zn(2+) as a cofactor.

Functionally, binds the 23S rRNA. The sequence is that of Large ribosomal subunit protein bL31 from Campylobacter jejuni subsp. doylei (strain ATCC BAA-1458 / RM4099 / 269.97).